Consider the following 354-residue polypeptide: Rhodopsin (354 aa).

The Extracellular portion of the chain corresponds to 1 to 36 (MNGTEGPNFYIPMSNKTGVVRSPFEYPQYYLAEPWK). 2 N-linked (GlcNAc...) asparagine glycosylation sites follow: asparagine 2 and asparagine 15. A helical transmembrane segment spans residues 37–61 (YSILAAYMFLLILLGFPINFMTLYV). The Cytoplasmic segment spans residues 62–73 (TIQHKKLRTPLN). The helical transmembrane segment at 74–96 (YILLNLAFANHFMVLCGFTITLY) threads the bilayer. Topologically, residues 97-110 (TSLHGYFVFGQSGC) are extracellular. A disulfide bridge connects residues cysteine 110 and cysteine 187. The chain crosses the membrane as a helical span at residues 111 to 133 (YFEGFFATLGGEIALWSLVALAI). Residues 134–136 (ERY) carry the 'Ionic lock' involved in activated form stabilization motif. Residues 134–152 (ERYIVVCKPMSNFRFGENH) lie on the Cytoplasmic side of the membrane. Residues 153–173 (AMMGVAFTWIMALACAVPPLF) form a helical membrane-spanning segment. Residues 174–202 (GWSRYIPEGMQCSCGVDYYTLKPEINNES) are Extracellular-facing. Residues 203 to 224 (FVIYMFVVHFLIPLIIITFCYG) traverse the membrane as a helical segment. Topologically, residues 225–252 (RLVCTVKEAAAQQQESATTQKAEKEVTR) are cytoplasmic. Residues 253–274 (MVIIMVIFFLICWVPYAYVAFY) traverse the membrane as a helical segment. At 275–286 (IFCNQGSEFGPI) the chain is on the extracellular side. The chain crosses the membrane as a helical span at residues 287–308 (FMTVPAFFAKSSAIYNPVIYIM). At lysine 296 the chain carries N6-(retinylidene)lysine. Topologically, residues 309 to 354 (LNKQFRNCMITTLCCGKNPFGDDDASSAATSKTEATSVSTSQVSPA) are cytoplasmic. 2 S-palmitoyl cysteine lipidation sites follow: cysteine 322 and cysteine 323. The interval 332-354 (DASSAATSKTEATSVSTSQVSPA) is disordered. Residues 334–354 (SSAATSKTEATSVSTSQVSPA) are compositionally biased toward low complexity.

Belongs to the G-protein coupled receptor 1 family. Opsin subfamily. In terms of processing, contains one covalently linked retinal chromophore. Upon light absorption, the covalently bound 11-cis-retinal is converted to all-trans-retinal. After hydrolysis of the Schiff base and release of the covalently bound all-trans-retinal, active rhodopsin is regenerated by binding of a fresh molecule of 11-cis-retinal.

The protein localises to the membrane. The protein resides in the cell projection. It localises to the cilium. It is found in the photoreceptor outer segment. Functionally, photoreceptor required for image-forming vision at low light intensity. Required for photoreceptor cell viability after birth. Light-induced isomerization of 11-cis to all-trans retinal triggers a conformational change that activates signaling via G-proteins. Subsequent receptor phosphorylation mediates displacement of the bound G-protein alpha subunit by arrestin and terminates signaling. The sequence is that of Rhodopsin (RHO) from Rana temporaria (European common frog).